We begin with the raw amino-acid sequence, 516 residues long: Cyclic AMP response element-binding protein A (516 aa).

3 positions are modified to phosphoserine: Ser75, Ser79, and Ser82. Disordered regions lie at residues 213–237 (KDEP…SQHQ), 294–338 (KSEK…HLFA), and 353–408 (PAGG…KGST). Over residues 221–237 (SSCPASPTSQASSSQHQ) the composition is skewed to low complexity. A compositionally biased stretch (low complexity) spans 361-392 (RVSRTAASITRSSSGSASASGSSTSSTVTTTR). The 64-residue stretch at 441–504 (SLKKIRRKIK…ANLLSQLHKL (64 aa)) folds into the bZIP domain. The basic motif stretch occupies residues 443-463 (KKIRRKIKNKISAQESRRKKK). A leucine-zipper region spans residues 469–476 (LERRVEIL).

The protein belongs to the bZIP family. May bind DNA as heterodimers with other bZIP proteins. In terms of tissue distribution, in all cell types examined, including developing salivary gland in embryos and in adults, brain and optic lobe cell bodies, salivary gland, midgut epithelial cells of the cardia, female ovarian columnar follicle cells and male seminal vesicle, ejaculatory duct, and ejaculatory bulb.

Its subcellular location is the nucleus. Its function is as follows. Transcriptional activator. Binds to fat body-specific enhancers of alcohol dehydrogenase (ADH) and yolk protein genes. BBF-2 may play a role in fat body gene expression. It binds the consensus sequence 5'-T[AC]NACGTAN[TG]C-3'. The polypeptide is Cyclic AMP response element-binding protein A (CrebA) (Drosophila melanogaster (Fruit fly)).